The sequence spans 93 residues: CRISPR-associated endoribonuclease Cas2 2 (93 aa).

D9 is a Mg(2+) binding site.

This sequence belongs to the CRISPR-associated endoribonuclease Cas2 protein family. In terms of assembly, homodimer, forms a heterotetramer with a Cas1 homodimer. Mg(2+) is required as a cofactor.

Functionally, CRISPR (clustered regularly interspaced short palindromic repeat), is an adaptive immune system that provides protection against mobile genetic elements (viruses, transposable elements and conjugative plasmids). CRISPR clusters contain sequences complementary to antecedent mobile elements and target invading nucleic acids. CRISPR clusters are transcribed and processed into CRISPR RNA (crRNA). Functions as a ssRNA-specific endoribonuclease. Involved in the integration of spacer DNA into the CRISPR cassette. The sequence is that of CRISPR-associated endoribonuclease Cas2 2 from Synechocystis sp. (strain ATCC 27184 / PCC 6803 / Kazusa).